Here is a 172-residue protein sequence, read N- to C-terminus: Adenine phosphoribosyltransferase (172 aa).

The protein belongs to the purine/pyrimidine phosphoribosyltransferase family. Homodimer.

The protein localises to the cytoplasm. It carries out the reaction AMP + diphosphate = 5-phospho-alpha-D-ribose 1-diphosphate + adenine. The protein operates within purine metabolism; AMP biosynthesis via salvage pathway; AMP from adenine: step 1/1. Functionally, catalyzes a salvage reaction resulting in the formation of AMP, that is energically less costly than de novo synthesis. This Polynucleobacter asymbioticus (strain DSM 18221 / CIP 109841 / QLW-P1DMWA-1) (Polynucleobacter necessarius subsp. asymbioticus) protein is Adenine phosphoribosyltransferase.